A 196-amino-acid chain; its full sequence is Acyl-homoserine-lactone synthase (196 aa).

It belongs to the autoinducer synthase family.

The catalysed reaction is a fatty acyl-[ACP] + S-adenosyl-L-methionine = an N-acyl-L-homoserine lactone + S-methyl-5'-thioadenosine + holo-[ACP] + H(+). In terms of biological role, required for the synthesis of a yet unknown N-aceyl-homoserine lactone (N-aceyl-HSL), an autoinducer molecule which binds to PhzR and thus regulates phenazine production. The sequence is that of Acyl-homoserine-lactone synthase (phzI) from Pseudomonas chlororaphis (Pseudomonas aureofaciens).